Reading from the N-terminus, the 400-residue chain is tRNA(Met) cytidine acetate ligase (400 aa).

Residues 7-20, Gly101, Asn159, and 184-185 contribute to the ATP site; these read IVEY…HLYH and RI.

This sequence belongs to the TmcAL family.

It localises to the cytoplasm. It catalyses the reaction cytidine(34) in elongator tRNA(Met) + acetate + ATP = N(4)-acetylcytidine(34) in elongator tRNA(Met) + AMP + diphosphate. Its function is as follows. Catalyzes the formation of N(4)-acetylcytidine (ac(4)C) at the wobble position of elongator tRNA(Met), using acetate and ATP as substrates. First activates an acetate ion to form acetyladenylate (Ac-AMP) and then transfers the acetyl group to tRNA to form ac(4)C34. The chain is tRNA(Met) cytidine acetate ligase from Caldicellulosiruptor bescii (strain ATCC BAA-1888 / DSM 6725 / KCTC 15123 / Z-1320) (Anaerocellum thermophilum).